Reading from the N-terminus, the 204-residue chain is Pectinesterase inhibitor 9 (204 aa).

Residues 1-23 (MELKNTIFLVILLSITILQSSSA) form the signal peptide. A glycan (N-linked (GlcNAc...) asparagine) is linked at Asn-26. 2 cysteine pairs are disulfide-bonded: Cys-38-Cys-47 and Cys-106-Cys-157.

The protein belongs to the PMEI family. In terms of assembly, binds reversibly to PME3 to inhibit its activity; the stability of the PME3-PMEI9 complex and the inhibition of the pectin methylesterase (PME) activity is pH-dependent, based on protonation status of amino-acids at the complex interface. As to expression, highly expressed in roots and etiolated hypocotyls. Expressed in seedlings, leaves, stems, siliques, floral buds and mature seeds.

The protein localises to the secreted. Its subcellular location is the extracellular space. It is found in the apoplast. In terms of biological role, pectin methylesterase (PME) inhibitor that probably targets root-expressed PME and PME3 in a moderate pH-dependent manner, mainly in slightly acidic conditions (pH 6.3 and 5.0) and to some extent at pH 7.5; this processus relies on changes in the protonation of amino acids involved in intermolecular and intramolecular interactions. Regulates de-methylesterification of pectins in roots and affects root growth. In Arabidopsis thaliana (Mouse-ear cress), this protein is Pectinesterase inhibitor 9.